The sequence spans 925 residues: TBC1 domain family member 2A (925 aa).

Residue Met-1 is modified to N-acetylmethionine. Residues Met-1–Arg-41 are disordered. The interval Met-1–Glu-171 is interaction with CADH1. The 98-residue stretch at Pro-47–Trp-144 folds into the PH domain. Positions Asn-231–Leu-278 are disordered. Positions Ser-297–Pro-435 are interaction with RAC1. A coiled-coil region spans residues Arg-302 to Lys-475. Positions Gly-622–Gly-814 constitute a Rab-GAP TBC domain. The stretch at Met-872–Gln-907 forms a coiled coil. A disordered region spans residues Arg-904–Pro-925. Acidic residues predominate over residues Pro-916–Pro-925. At Ser-917 the chain carries Phosphoserine.

As to quaternary structure, interacts with activated RAC1 and CDH1.

The protein resides in the cytoplasm. It localises to the cytoplasmic vesicle. The protein localises to the cell junction. Functionally, may act as a GTPase-activating protein for Rab family protein(s). Signal effector acting as a linker between RAC1 and RAB7A, leading to RAB7A inactivation and further inhibition of cadherin degradation. The protein is TBC1 domain family member 2A (TBC1D2) of Bos taurus (Bovine).